Reading from the N-terminus, the 101-residue chain is Small ribosomal subunit protein uS14 (101 aa).

The disordered stretch occupies residues 51–70 (LPRDSSPSRQRNRCRQTGRP).

The protein belongs to the universal ribosomal protein uS14 family. As to quaternary structure, part of the 30S ribosomal subunit. Contacts proteins S3 and S10.

Functionally, binds 16S rRNA, required for the assembly of 30S particles and may also be responsible for determining the conformation of the 16S rRNA at the A site. The chain is Small ribosomal subunit protein uS14 from Salmonella arizonae (strain ATCC BAA-731 / CDC346-86 / RSK2980).